The chain runs to 378 residues: Sphingosine 1-phosphate receptor 3 (378 aa).

The Extracellular segment spans residues 1–44 (MATTHAQGHQPVLGNDTLREHYDYVGKLAGRLRDPPEGGTLITT). A glycan (N-linked (GlcNAc...) asparagine) is linked at Asn-15. A helical transmembrane segment spans residues 45–65 (ILFLVTCSFIVLENLMVLIAI). Residues 66–74 (WKNNKFHNR) are Cytoplasmic-facing. A helical membrane pass occupies residues 75 to 95 (MYFFIGNLALCDLLAGIAYKV). At 96-115 (NILMSGRKTFSLSPTVWFLR) the chain is on the extracellular side. Residues 116–136 (EGSMFVALGASTCSLLAIAIE) form a helical membrane-spanning segment. Topologically, residues 137–154 (RHLTMIKMRPYDANKKHR) are cytoplasmic. The helical transmembrane segment at 155 to 175 (VFLLIGMCWLIAFSLGALPIL) threads the bilayer. Residues 176-196 (GWNCLENFPDCSTILPLYSKK) lie on the Extracellular side of the membrane. The chain crosses the membrane as a helical span at residues 197–217 (YIAFLISIFTAILVTIVILYA). The Cytoplasmic portion of the chain corresponds to 218–244 (RIYCLVKSSSRRVANHNSERSMALLRT). Residues 245 to 265 (VVIVVSVFIACWSPLFILFLI) form a helical membrane-spanning segment. Residues 266–281 (DVACRAKECSILFKSQ) are Extracellular-facing. The helical transmembrane segment at 282 to 302 (WFIMLAVLNSAMNPVIYTLAS) threads the bilayer. Topologically, residues 303-378 (KEMRRAFFRL…RSFQNGVLCK (76 aa)) are cytoplasmic. Residues 323–354 (TQASPMQPALDPSRSKSSSSNNSSHSPKVKED) form a disordered region. Ser-326 bears the Phosphoserine mark. The segment covering 337-348 (SKSSSSNNSSHS) has biased composition (low complexity).

It belongs to the G-protein coupled receptor 1 family. In terms of tissue distribution, most abundant in heart, lung, kidney and spleen; low but detectable in brain, thymus, muscle and testis; and nearly undetectable in liver, stomach, and intestine. Expressed in embryonic lung from embryonic day 14-18. Also abundantly detected in embryonic nasal cartilage, sphenoid bone, vena cava, Meckel's cartilage/incisor teeth, genital tubercle and bladder.

The protein resides in the cell membrane. Functionally, receptor for the lysosphingolipid sphingosine 1-phosphate (S1P). S1P is a bioactive lysophospholipid that elicits diverse physiological effect on most types of cells and tissues. The protein is Sphingosine 1-phosphate receptor 3 (S1pr3) of Mus musculus (Mouse).